An 819-amino-acid chain; its full sequence is Cadherin-24 (819 aa).

Positions 1-19 are cleaved as a signal peptide; the sequence is MWGLVRLLLAWLGGWGCMG. A propeptide spanning residues 21-44 is cleaved from the precursor; sequence LAAPARAWAGSREHPGPALLRTRR. The Extracellular portion of the chain corresponds to 45-641; the sequence is SWVWNQFFVI…LSAAGLSTGA (597 aa). Cadherin domains follow at residues 46-150, 151-259, 260-374, 375-517, and 517-630; these read WVWN…PPIF, PLGP…PPKF, PQSL…PPAF, TQAA…APQL, and LAEP…WPEA. N-linked (GlcNAc...) asparagine glycans are attached at residues Asn446, Asn548, and Asn563. The helical transmembrane segment at 642–662 threads the bilayer; sequence LLAIITCVGALLALVVLFVAL. Over 663 to 819 the chain is Cytoplasmic; it reads RRQKQEALMV…LYGAKEPPAP (157 aa). A disordered region spans residues 768 to 800; it reads YEGRGSSCGSLSSLGSGSEAGGAPGPAEPLDDW. A compositionally biased stretch (low complexity) spans 771–784; that stretch reads RGSSCGSLSSLGSG.

As to quaternary structure, associates with alpha-, beta- and delta-catenins.

The protein resides in the cell membrane. In terms of biological role, cadherins are calcium-dependent cell adhesion proteins. They preferentially interact with themselves in a homophilic manner in connecting cells; cadherins may thus contribute to the sorting of heterogeneous cell types. Cadherin-24 mediate strong cell-cell adhesion. This is Cadherin-24 (CDH24) from Homo sapiens (Human).